A 462-amino-acid polypeptide reads, in one-letter code: S-alkyl-thiohydroximate lyase SUR1 (462 aa).

The protein belongs to the class-I pyridoxal-phosphate-dependent aminotransferase family. Requires pyridoxal 5'-phosphate as cofactor.

Its function is as follows. C-S lyase involved in glucosinolate biosynthesis. Converts S-(alkylacetohydroximoyl)-L-cysteine to thiohydroximate. Functions in auxin homeostasis. Probably required for glucosinolate activation in response to pathogens. This is S-alkyl-thiohydroximate lyase SUR1 (SUR1) from Arabidopsis thaliana (Mouse-ear cress).